The following is a 160-amino-acid chain: Protein cornichon homolog 2 (160 aa).

Residues 1 to 10 (MAFTFAAFCY) are Cytoplasmic-facing. Residues 11–31 (MLTLVLCASLIFFVIWHIIAF) traverse the membrane as a helical segment. The Lumenal portion of the chain corresponds to 32-72 (DELRTDFKNPIDQGNPARARERLKNIERICCLLRKLVVPEY). Residues 73 to 93 (CIHGLFCLMFLCAAEWVTLGL) form a helical membrane-spanning segment. Topologically, residues 94–138 (NLPLLLYHLWRYFHRPSDGSEGLFDAVSIMDADILGYCQKEAWCK) are cytoplasmic. The chain crosses the membrane as a helical span at residues 139 to 159 (LAFYLLSFFYYLYSMVYTLVS). Phenylalanine 160 is a topological domain (lumenal).

The protein belongs to the cornichon family. As to quaternary structure, interacts with HBEGF. In terms of tissue distribution, expressed in the odd-numbered neuromeres (r3 and r5) of the developing hindbrain.

It localises to the membrane. Regulates the trafficking and gating properties of AMPA-selective glutamate receptors (AMPARs). Plays an important role in the proper development of cranial nerves by facilitating the secretion of HBEGF. This chain is Protein cornichon homolog 2 (CNIH2), found in Gallus gallus (Chicken).